The following is a 273-amino-acid chain: Ribosomal RNA small subunit methyltransferase A (273 aa).

S-adenosyl-L-methionine is bound by residues Asn-18, Leu-20, Gly-45, Glu-66, Asp-91, and Asn-113.

Belongs to the class I-like SAM-binding methyltransferase superfamily. rRNA adenine N(6)-methyltransferase family. RsmA subfamily.

It is found in the cytoplasm. The catalysed reaction is adenosine(1518)/adenosine(1519) in 16S rRNA + 4 S-adenosyl-L-methionine = N(6)-dimethyladenosine(1518)/N(6)-dimethyladenosine(1519) in 16S rRNA + 4 S-adenosyl-L-homocysteine + 4 H(+). In terms of biological role, specifically dimethylates two adjacent adenosines (A1518 and A1519) in the loop of a conserved hairpin near the 3'-end of 16S rRNA in the 30S particle. May play a critical role in biogenesis of 30S subunits. This chain is Ribosomal RNA small subunit methyltransferase A, found in Klebsiella pneumoniae subsp. pneumoniae (strain ATCC 700721 / MGH 78578).